The following is a 528-amino-acid chain: GMP synthase [glutamine-hydrolyzing] (528 aa).

A Glutamine amidotransferase type-1 domain is found at 13–204; it reads AIVILDFGSQ…VYHICGCEPD (192 aa). Cysteine 90 acts as the Nucleophile in catalysis. Active-site residues include histidine 178 and glutamate 180. A GMPS ATP-PPase domain is found at 205-403; that stretch reads WTTTAFIEEA…LGLPEEIVRR (199 aa). Residue 232–238 coordinates ATP; it reads SGGVDSS.

In terms of assembly, homodimer.

It catalyses the reaction XMP + L-glutamine + ATP + H2O = GMP + L-glutamate + AMP + diphosphate + 2 H(+). The protein operates within purine metabolism; GMP biosynthesis; GMP from XMP (L-Gln route): step 1/1. In terms of biological role, catalyzes the synthesis of GMP from XMP. This Prochlorococcus marinus (strain MIT 9303) protein is GMP synthase [glutamine-hydrolyzing].